Reading from the N-terminus, the 781-residue chain is Catenin beta-1 (781 aa).

The residue at position 2 (alanine 2) is an N-acetylalanine. An interaction with VCL region spans residues 2-23 (ATQADLMELDMAMEPDRKAAVS). Serine 23 carries the post-translational modification Phosphoserine; by GSK3-beta; alternate. A glycan (O-linked (GlcNAc) serine; alternate) is linked at serine 23. A Phosphoserine; by GSK3-beta modification is found at serine 29. A phosphoserine; by GSK3-beta and HIPK2 mark is found at serine 33 and serine 37. The segment at 34-57 (GIHSGATTTAPSLSGKGNPEEEDV) is disordered. Phosphothreonine; by GSK3-beta is present on threonine 41. Position 45 is a phosphoserine (serine 45). Lysine 49 is modified (N6-acetyllysine). Residue tyrosine 64 is modified to Phosphotyrosine; by PTK6. Tyrosine 142 carries the phosphotyrosine; by FYN and PTK6 modification. ARM repeat units follow at residues 151–191 (RAIP…IMRS), 193–234 (QMVS…IFKS), 235–276 (GGIP…VRLA), 277–318 (GGLQ…ILAS), 319–360 (GGPQ…IVEA), 361–389 (GGMQ…RNLS), 400–441 (GLLG…VCQV), 442–484 (GGIE…AQNA), 489–530 (YGLP…LREQ), 531–571 (GAIP…EIVE), 594–636 (NTIP…AEGA), and 637–666 (TAPL…SEDK). Positions 156–178 (LTKLLNDEDQVVVNKAAVMVHQL) are interaction with BCL9. At serine 191 the chain carries Phosphoserine. At serine 246 the chain carries Phosphoserine; by CDK5. Residues tyrosine 331 and tyrosine 333 each carry the phosphotyrosine modification. Serine 552 bears the Phosphoserine; by AMPK mark. Residue threonine 556 is modified to Phosphothreonine. The residue at position 619 (cysteine 619) is an S-nitrosocysteine. Phosphoserine is present on serine 675. The tract at residues 720–781 (HSGGYGQDAL…NQLAWFDTDL (62 aa)) is disordered. A compositionally biased stretch (basic and acidic residues) spans 734-745 (MMEHEMGGHHPG). The interval 772–781 (NQLAWFDTDL) is interaction with SCRIB.

Belongs to the beta-catenin family. In terms of assembly, two separate complex-associated pools are found in the cytoplasm. The majority is present as component of an E-cadherin/ catenin adhesion complex composed of at least E-cadherin/CDH1 and beta-catenin/CTNNB1, and possibly alpha-catenin/CTNNA1; the complex is located to adherens junctions. The stable association of CTNNA1 is controversial as CTNNA1 was shown not to bind to F-actin when assembled in the complex. Alternatively, the CTNNA1-containing complex may be linked to F-actin by other proteins such as LIMA1. Binds NHERF1. Interacts with PTPRU (via the cytoplasmic juxtamembrane domain) and with EMD. Interacts with SESTD1 and TRPC4. Interacts with CAV1. Interacts with PTPRJ. Interacts with PKT7. Interacts with FAT1 (via the cytoplasmic domain). Interacts with CDK2, NDRG2 and NANOS1. Interacts with NEK2 and CDK5. Interacts with CARM1, CXADR, PCDH11Y and PTK6. Interacts with RAPGEF2. Interacts with SOX7; this interaction may lead to proteasomal degradation of active CTNNB1 and thus inhibition of Wnt/beta-catenin-stimulated transcription. Identified in a complex with HINT1 and MITF. Interacts with FHIT. Interacts with FERMT2. Identified in a complex with TCF4 and FERMT2. Another cytoplasmic pool is part of a large complex containing AXIN1, AXIN2, APC, CSNK1A1 and GSK3B that promotes phosphorylation on N-terminal Ser and Thr residues and ubiquitination of CTNNB1 via BTRC and its subsequent degradation by the proteasome. Wnt-dependent activation of DVL antagonizes the action of GSK3B. When GSK3B activity is inhibited the complex dissociates, CTNNB1 is dephosphorylated and is no longer targeted for destruction. The stabilized protein translocates to the nucleus, where it binds TCF/LEF-1 family members, BCL9, BCL9L and possibly also RUVBL1 and CHD8. Interacts with TAX1BP3 (via the PDZ domain); this interaction inhibits the transcriptional activity of CTNNB1. Interacts with AJAP1, BAIAP1 and CTNNA3. Interacts with TRPV4; the TRPV4 and CTNNB1 complex can interact with CDH1. Interacts with VCL. The CTNNB1 and TCF4 complex interacts with PML. Interacts with XIRP1. Binds CTNNBIP and EP300. CTNNB1 forms a ternary complex with LEF1 and EP300 that is disrupted by CTNNBIP1 binding. Interacts directly with AXIN1; the interaction is regulated by CDK2 phosphorylation of AXIN1. Interacts with GLIS2. Interacts with SCRIB. Interacts with TNIK and TCF7L2. Interacts with SLC30A9. Interacts with RORA. May interact with P-cadherin/CDH3. Interacts with RNF220. Interacts with CTNND2. Interacts (via the C-terminal region) with CBY1. The complex composed, at least, of APC, CTNNB1 and GSK3B interacts with JPT1; the interaction requires the inactive form of GSK3B (phosphorylated at 'Ser-9'). Interacts with DLG5. Interacts with FAM53B; promoting translocation to the nucleus. Interacts with TMEM170B. Interacts with AHI1. Interacts with GID8. Component of an cadherin:catenin adhesion complex composed of at least of CDH26, beta-catenin/CTNNB1, alpha-catenin/CTNNA1 and p120 catenin/CTNND1. Forms a complex comprising APPL1, RUVBL2, APPL2, HDAC1 and HDAC2. Interacts with IRF2BPL; mediates the ubiquitination and degradation of CTNNB1. Interacts with AMFR. Interacts with LMBR1L. Interacts with SOX30; prevents interaction of CTNNB1 with TCF7L2/TCF4 and leads to inhibition of Wnt signaling. Interacts with SOX9; inhibiting CTNNB1 activity by competing with the binding sites of TCF/LEF within CTNNB1, thereby inhibiting the Wnt signaling. Interacts with SPN/CD43 cytoplasmic tail. Interacts (when phosphorylated at Tyr-333) with isoform M2 of PKM (PKM2); promoting transcription activation. Interacts with PKP2 (via HEAD domain). Interacts with CDH1. Interacts (when unphosphorylated) with FLYWCH1, perhaps preventing interaction of CTNNB1 with TCF4, and thereby regulating transcription activation; phosphorylation of CTNNB1 may inhibit the interaction. Interacts (via the central armadillo domains) with probable transcriptional regulator ADNP (via N-terminal region); interaction is direct and stabilizes CTNNB1 by modulating its phosphorylation by glycogen synthase kinase-3 beta GSK3B. Interacts with NR5A2. Interacts with DSG2; the interaction promotes localization of CTNNB1 at cell junctions thus reducing its nuclear localization and subsequent transcription of CTNNB1/TCF-target genes. In terms of processing, phosphorylation at Ser-552 by AMPK promotes stabilization of the protein, enhancing TCF/LEF-mediated transcription. Phosphorylation by GSK3B requires prior phosphorylation of Ser-45 by another kinase. Phosphorylation proceeds then from Thr-41 to Ser-37 and Ser-33. Phosphorylated by NEK2. EGF stimulates tyrosine phosphorylation. Phosphorylated on Ser-33 and Ser-37 by HIPK2 and GSK3B, this phosphorylation triggers proteasomal degradation. Phosphorylation on Ser-191 and Ser-246 by CDK5. Phosphorylation by CDK2 regulates insulin internalization. Phosphorylation by PTK6 at Tyr-64, Tyr-142, Tyr-331 and/or Tyr-333 with the predominant site at Tyr-64 is not essential for inhibition of transcriptional activity. Phosphorylation by SRC at Tyr-333 promotes interaction with isoform M2 of PKM (PKM2); promoting transcription activation. Post-translationally, ubiquitinated by the SCF(BTRC) E3 ligase complex when phosphorylated by GSK3B, leading to its degradation. Ubiquitinated by a E3 ubiquitin ligase complex containing UBE2D1, SIAH1, CACYBP/SIP, SKP1, APC and TBL1X, leading to its subsequent proteasomal degradation. Ubiquitinated and degraded following interaction with SOX9. Ubiquitinated via 'Lys-11'- and 'Lys-29'-linked ubiquitin chains by UBR5, leading to its stabilization. S-nitrosylation at Cys-619 within adherens junctions promotes VEGF-induced, NO-dependent endothelial cell permeability by disrupting interaction with E-cadherin, thus mediating disassembly adherens junctions. In terms of processing, O-glycosylation at Ser-23 decreases nuclear localization and transcriptional activity, and increases localization to the plasma membrane and interaction with E-cadherin CDH1. Post-translationally, deacetylated at Lys-49 by SIRT1. In terms of tissue distribution, expressed in cerebellar granule neurons (at protein level). Expressed in the intestinal epithelium (at protein level). Abundantly expressed in the tooth, skin, lung, kidney, eye and brain with weak expression in the liver and heart.

The protein resides in the cytoplasm. The protein localises to the nucleus. Its subcellular location is the cytoskeleton. It is found in the cell junction. It localises to the adherens junction. The protein resides in the cell membrane. The protein localises to the microtubule organizing center. Its subcellular location is the centrosome. It is found in the spindle pole. It localises to the synapse. The protein resides in the cilium basal body. In terms of biological role, key downstream component of the canonical Wnt signaling pathway. In the absence of Wnt, forms a complex with AXIN1, AXIN2, APC, CSNK1A1 and GSK3B that promotes phosphorylation on N-terminal Ser and Thr residues and ubiquitination of CTNNB1 via BTRC and its subsequent degradation by the proteasome. In the presence of Wnt ligand, CTNNB1 is not ubiquitinated and accumulates in the nucleus, where it acts as a coactivator for transcription factors of the TCF/LEF family, leading to activate Wnt responsive genes. Also acts as a coactivator for other transcription factors, such as NR5A2. Promotes epithelial to mesenchymal transition/mesenchymal to epithelial transition (EMT/MET) via driving transcription of CTNNB1/TCF-target genes. Involved in the regulation of cell adhesion, as component of an E-cadherin:catenin adhesion complex. Acts as a negative regulator of centrosome cohesion. Involved in the CDK2/PTPN6/CTNNB1/CEACAM1 pathway of insulin internalization. Blocks anoikis of malignant kidney and intestinal epithelial cells and promotes their anchorage-independent growth by down-regulating DAPK2. Disrupts PML function and PML-NB formation by inhibiting RANBP2-mediated sumoylation of PML. Promotes neurogenesis by maintaining sympathetic neuroblasts within the cell cycle. Involved in chondrocyte differentiation via interaction with SOX9: SOX9-binding competes with the binding sites of TCF/LEF within CTNNB1, thereby inhibiting the Wnt signaling. Acts as a positive regulator of odontoblast differentiation during mesenchymal tooth germ formation, via promoting the transcription of differentiation factors such as LEF1, BMP2 and BMP4. Activity is repressed in a MSX1-mediated manner at the bell stage of mesenchymal tooth germ formation which prevents premature differentiation of odontoblasts. This Mus musculus (Mouse) protein is Catenin beta-1.